Reading from the N-terminus, the 106-residue chain is Cell division protein FtsB (106 aa).

Over 1-3 (MGK) the chain is Cytoplasmic. A helical transmembrane segment spans residues 4 to 21 (LTLLLLALLGWLQYSLWL). The Periplasmic segment spans residues 22–106 (GKNGVHDYVR…ASSSQNNLQK (85 aa)). Positions 40-62 (QGSNAKLKARNDQLFAEIDDLNG) form a coiled coil.

It belongs to the FtsB family. As to quaternary structure, part of a complex composed of FtsB, FtsL and FtsQ.

It localises to the cell inner membrane. Its function is as follows. Essential cell division protein. May link together the upstream cell division proteins, which are predominantly cytoplasmic, with the downstream cell division proteins, which are predominantly periplasmic. This Serratia proteamaculans (strain 568) protein is Cell division protein FtsB.